A 684-amino-acid chain; its full sequence is Threonine--tRNA ligase (684 aa).

The region spanning 1–66 (MTVPATDSCP…DTDAEVVPVA (66 aa)) is the TGS domain. Residues 261–567 (DHRKLGSELD…LTEHYAGAFP (307 aa)) are catalytic. The Zn(2+) site is built by C366, H417, and H544.

The protein belongs to the class-II aminoacyl-tRNA synthetase family. As to quaternary structure, homodimer. Requires Zn(2+) as cofactor.

The protein resides in the cytoplasm. The enzyme catalyses tRNA(Thr) + L-threonine + ATP = L-threonyl-tRNA(Thr) + AMP + diphosphate + H(+). Its function is as follows. Catalyzes the attachment of threonine to tRNA(Thr) in a two-step reaction: L-threonine is first activated by ATP to form Thr-AMP and then transferred to the acceptor end of tRNA(Thr). Also edits incorrectly charged L-seryl-tRNA(Thr). The polypeptide is Threonine--tRNA ligase (Mycolicibacterium paratuberculosis (strain ATCC BAA-968 / K-10) (Mycobacterium paratuberculosis)).